A 132-amino-acid chain; its full sequence is Fluoride-specific ion channel FluC (132 aa).

A run of 4 helical transmembrane segments spans residues Leu-5–Val-25, Thr-32–Ala-52, Phe-70–Leu-90, and Val-105–Gly-125. Positions 77 and 80 each coordinate Na(+).

It belongs to the fluoride channel Fluc/FEX (TC 1.A.43) family.

The protein localises to the cell inner membrane. The catalysed reaction is fluoride(in) = fluoride(out). With respect to regulation, na(+) is not transported, but it plays an essential structural role and its presence is essential for fluoride channel function. Functionally, fluoride-specific ion channel. Important for reducing fluoride concentration in the cell, thus reducing its toxicity. The protein is Fluoride-specific ion channel FluC of Opitutus terrae (strain DSM 11246 / JCM 15787 / PB90-1).